Reading from the N-terminus, the 89-residue chain is Small ribosomal subunit protein uS15 (89 aa).

This sequence belongs to the universal ribosomal protein uS15 family. Part of the 30S ribosomal subunit. Forms a bridge to the 50S subunit in the 70S ribosome, contacting the 23S rRNA.

In terms of biological role, one of the primary rRNA binding proteins, it binds directly to 16S rRNA where it helps nucleate assembly of the platform of the 30S subunit by binding and bridging several RNA helices of the 16S rRNA. Functionally, forms an intersubunit bridge (bridge B4) with the 23S rRNA of the 50S subunit in the ribosome. In Hamiltonella defensa subsp. Acyrthosiphon pisum (strain 5AT), this protein is Small ribosomal subunit protein uS15.